Consider the following 287-residue polypeptide: MATEEPVIVNEVVEEQAAPETVKDEANPPAKSGKAKKETKAKKPAAPRKRSATPTHPPYFEMIKDAIVTLKERTGSSQHAITKFIEEKQKSLPSNFKKLLLTQLKKFVASEKLVKVKNSYKLPSGSKPAAAAVPAKKKPAAAKSKPAAKPKAAVKPKAKPAAKAKPAAKAKPAAKAKPAAKAKPAAKAKPAAKAKPVAKAKPKAAAAAKPKAAVKPKAAPAKTKAAVKPNLKAKTTTAKVAKTATRTTPSRKAAPKATPAKKEPVKKAPAKNVKSPAKKATPKRGRK.

Positions 1–11 (MATEEPVIVNE) are enriched in low complexity. Disordered regions lie at residues 1 to 58 (MATE…THPP) and 120 to 287 (YKLP…RGRK). The span at 33-51 (GKAKKETKAKKPAAPRKRS) shows a compositional bias: basic residues. Positions 55-124 (THPPYFEMIK…KVKNSYKLPS (70 aa)) constitute an H15 domain. Basic residues predominate over residues 135–202 (AKKKPAAAKS…KAKPVAKAKP (68 aa)). Residues 203-248 (KAAAAAKPKAAVKPKAAPAKTKAAVKPNLKAKTTTAKVAKTATRTT) show a composition bias toward low complexity. Basic residues predominate over residues 276-287 (PAKKATPKRGRK).

Belongs to the histone H1/H5 family.

Its subcellular location is the nucleus. It localises to the chromosome. Histones H1 are necessary for the condensation of nucleosome chains into higher-order structures. This is Histone H1 from Solanum lycopersicum (Tomato).